The chain runs to 199 residues: NAD(P)H dehydrogenase (quinone) (199 aa).

One can recognise a Flavodoxin-like domain in the interval 4–190; that stretch reads VLVLYYSTYG…DGARYQGRHV (187 aa). FMN is bound by residues 10-15 and 78-80; these read STYGHI and TRY. NAD(+) is bound at residue Tyr12. Trp98 serves as a coordination point for substrate. Residues 113–119 and His134 contribute to the FMN site; that span reads SSASQHG.

It belongs to the WrbA family. FMN serves as cofactor.

It carries out the reaction a quinone + NADH + H(+) = a quinol + NAD(+). It catalyses the reaction a quinone + NADPH + H(+) = a quinol + NADP(+). This Methylobacterium sp. (strain 4-46) protein is NAD(P)H dehydrogenase (quinone).